The chain runs to 365 residues: MDFKLTVLPGDGIGPEVMAEGLKVLNAVAKKYKHSFEYQYGLIGGCCIDKEGVALSPETLAMCKKSDAVLLAAVGDPRFDDPKLPVHPEDGLLALRRGLGLFANIRPVKVAPSLVNSAPIKAEIVKGTDFIFIRELTGGVYFAKPKKRWTTPSGIRKATDSMTYSEKEIERIVRVGFELARSRKKKLVSVDKANVLLSSRLWRQIVIEIAKDYPDITVEHILVDACAMKLILAPTYFDVIVTENMFGDILTDEASMLAGSMGMLPSASLAGIPAKGTKTFGLYEPIHGSAPTIAKQNIANPIATILSIAMMLRYSCGLETEAAEIEAAVDKVLAAGYATIDIFKEGNTKLGTAEMGSQIAKIIGG.

Residues Arg-96, Arg-106, Arg-134, and Asp-224 each contribute to the substrate site. 3 residues coordinate Mg(2+): Asp-224, Asp-248, and Asp-252. 288–300 (GSAPTIAKQNIAN) is an NAD(+) binding site.

It belongs to the isocitrate and isopropylmalate dehydrogenases family. LeuB type 1 subfamily. In terms of assembly, homodimer. It depends on Mg(2+) as a cofactor. The cofactor is Mn(2+).

It localises to the cytoplasm. It carries out the reaction (2R,3S)-3-isopropylmalate + NAD(+) = 4-methyl-2-oxopentanoate + CO2 + NADH. It participates in amino-acid biosynthesis; L-leucine biosynthesis; L-leucine from 3-methyl-2-oxobutanoate: step 3/4. Functionally, catalyzes the oxidation of 3-carboxy-2-hydroxy-4-methylpentanoate (3-isopropylmalate) to 3-carboxy-4-methyl-2-oxopentanoate. The product decarboxylates to 4-methyl-2 oxopentanoate. This Dehalococcoides mccartyi (strain ATCC BAA-2266 / KCTC 15142 / 195) (Dehalococcoides ethenogenes (strain 195)) protein is 3-isopropylmalate dehydrogenase.